Here is a 238-residue protein sequence, read N- to C-terminus: Response regulator receiver protein Anae109_2439 (238 aa).

2 Response regulatory domains span residues 3–117 (RYLI…AAAR) and 121–228 (LVAV…ERLH). 4-aspartylphosphate occurs at positions 52 and 169.

In terms of processing, is diphosphorylated by GchK.

Its function is as follows. Member of the two-component regulatory system GcHK/Anae109_2439. Is involved in a signal transduction system responding to oxygen availability. This Anaeromyxobacter sp. (strain Fw109-5) protein is Response regulator receiver protein Anae109_2439.